A 228-amino-acid polypeptide reads, in one-letter code: MRGLDLGLLDYVSAWRMMKILHREVASGGDDAFILVEHPHVITVGKHGRTNNVVKWELFVYVVERGGDATYHGPGQLVAYPVVKLRWPLSRYLWMLEEAVIRSLRPLGVEAGRVEKHRGVWVGGKKVASIGIAVEGGVAYHGVAVNVSTDLSYFYHINPCGLHPSAITSLNQLGVEISLEEYKGLFVEAFEEVFEAKVVWVDPAPYLAAAAQLRASPTLLSAPIEAST.

One can recognise a BPL/LPL catalytic domain in the interval 27 to 198 (SGGDDAFILV…AFEEVFEAKV (172 aa)). Residues 65–72 (RGGDATYH), 129–131 (SIG), and 142–144 (GVA) each bind substrate. Catalysis depends on cysteine 160, which acts as the Acyl-thioester intermediate.

This sequence belongs to the LipB family.

The protein localises to the cytoplasm. The catalysed reaction is octanoyl-[ACP] + L-lysyl-[protein] = N(6)-octanoyl-L-lysyl-[protein] + holo-[ACP] + H(+). It functions in the pathway protein modification; protein lipoylation via endogenous pathway; protein N(6)-(lipoyl)lysine from octanoyl-[acyl-carrier-protein]: step 1/2. Functionally, catalyzes the transfer of endogenously produced octanoic acid from octanoyl-acyl-carrier-protein onto the lipoyl domains of lipoate-dependent enzymes. Lipoyl-ACP can also act as a substrate although octanoyl-ACP is likely to be the physiological substrate. The polypeptide is Probable octanoyltransferase (Pyrobaculum calidifontis (strain DSM 21063 / JCM 11548 / VA1)).